The following is a 761-amino-acid chain: Phosphoribosylformylglycinamidine synthase subunit PurL (761 aa).

His-58 is a catalytic residue. Residues Tyr-61 and Lys-105 each coordinate ATP. Glu-107 is a Mg(2+) binding site. Residues 108-111 and Arg-130 each bind substrate; that span reads SHNH. His-109 (proton acceptor) is an active-site residue. Asp-131 serves as a coordination point for Mg(2+). Gln-259 lines the substrate pocket. Asp-287 lines the Mg(2+) pocket. 331–333 serves as a coordination point for substrate; the sequence is ESQ. The ATP site is built by Asn-519 and Gly-556. Residue Asn-557 participates in Mg(2+) binding. Ser-559 contributes to the substrate binding site.

This sequence belongs to the FGAMS family. In terms of assembly, monomer. Part of the FGAM synthase complex composed of 1 PurL, 1 PurQ and 2 PurS subunits.

Its subcellular location is the cytoplasm. It carries out the reaction N(2)-formyl-N(1)-(5-phospho-beta-D-ribosyl)glycinamide + L-glutamine + ATP + H2O = 2-formamido-N(1)-(5-O-phospho-beta-D-ribosyl)acetamidine + L-glutamate + ADP + phosphate + H(+). It participates in purine metabolism; IMP biosynthesis via de novo pathway; 5-amino-1-(5-phospho-D-ribosyl)imidazole from N(2)-formyl-N(1)-(5-phospho-D-ribosyl)glycinamide: step 1/2. Part of the phosphoribosylformylglycinamidine synthase complex involved in the purines biosynthetic pathway. Catalyzes the ATP-dependent conversion of formylglycinamide ribonucleotide (FGAR) and glutamine to yield formylglycinamidine ribonucleotide (FGAM) and glutamate. The FGAM synthase complex is composed of three subunits. PurQ produces an ammonia molecule by converting glutamine to glutamate. PurL transfers the ammonia molecule to FGAR to form FGAM in an ATP-dependent manner. PurS interacts with PurQ and PurL and is thought to assist in the transfer of the ammonia molecule from PurQ to PurL. The protein is Phosphoribosylformylglycinamidine synthase subunit PurL of Rhodococcus opacus (strain B4).